The chain runs to 342 residues: Ketol-acid reductoisomerase (NADP(+)) (342 aa).

In terms of domain architecture, KARI N-terminal Rossmann spans 2-181; the sequence is VKVYYNGDIK…GGARAGVLET (180 aa). Residues 25 to 28, Arg48, Ser52, and 82 to 85 each bind NADP(+); these read YGSQ and DEQQ. His107 is a catalytic residue. NADP(+) is bound at residue Gly133. Residues 182–327 enclose the KARI C-terminal knotted domain; it reads TFKEETETDL…RKLREMMPFV (146 aa). Mg(2+)-binding residues include Asp190, Glu194, Glu226, and Glu230. A substrate-binding site is contributed by Ser251.

Belongs to the ketol-acid reductoisomerase family. Mg(2+) is required as a cofactor.

The enzyme catalyses (2R)-2,3-dihydroxy-3-methylbutanoate + NADP(+) = (2S)-2-acetolactate + NADPH + H(+). The catalysed reaction is (2R,3R)-2,3-dihydroxy-3-methylpentanoate + NADP(+) = (S)-2-ethyl-2-hydroxy-3-oxobutanoate + NADPH + H(+). It participates in amino-acid biosynthesis; L-isoleucine biosynthesis; L-isoleucine from 2-oxobutanoate: step 2/4. The protein operates within amino-acid biosynthesis; L-valine biosynthesis; L-valine from pyruvate: step 2/4. Involved in the biosynthesis of branched-chain amino acids (BCAA). Catalyzes an alkyl-migration followed by a ketol-acid reduction of (S)-2-acetolactate (S2AL) to yield (R)-2,3-dihydroxy-isovalerate. In the isomerase reaction, S2AL is rearranged via a Mg-dependent methyl migration to produce 3-hydroxy-3-methyl-2-ketobutyrate (HMKB). In the reductase reaction, this 2-ketoacid undergoes a metal-dependent reduction by NADPH to yield (R)-2,3-dihydroxy-isovalerate. The protein is Ketol-acid reductoisomerase (NADP(+)) of Bacillus subtilis (strain 168).